A 528-amino-acid polypeptide reads, in one-letter code: Berberine bridge enzyme-like 17 (528 aa).

Positions Met-1 to Ala-19 are cleaved as a signal peptide. 4 N-linked (GlcNAc...) asparagine glycosylation sites follow: Asn-20, Asn-35, Asn-52, and Asn-72. Residues Cys-32 and Cys-94 are joined by a disulfide bond. Positions Leu-69 to Val-246 constitute an FAD-binding PCMH-type domain. Residues His-109–Cys-171 constitute a cross-link (6-(S-cysteinyl)-8alpha-(pros-histidyl)-FAD (His-Cys)). Asn-256, Asn-340, and Asn-439 each carry an N-linked (GlcNAc...) asparagine glycan.

This sequence belongs to the oxygen-dependent FAD-linked oxidoreductase family. Requires FAD as cofactor. In terms of processing, the FAD cofactor is bound via a bicovalent 6-S-cysteinyl, 8alpha-N1-histidyl FAD linkage.

Its subcellular location is the secreted. The protein localises to the cell wall. In Arabidopsis thaliana (Mouse-ear cress), this protein is Berberine bridge enzyme-like 17.